The chain runs to 108 residues: Large ribosomal subunit protein uL24 (108 aa).

The protein belongs to the universal ribosomal protein uL24 family. Part of the 50S ribosomal subunit.

In terms of biological role, one of two assembly initiator proteins, it binds directly to the 5'-end of the 23S rRNA, where it nucleates assembly of the 50S subunit. Its function is as follows. One of the proteins that surrounds the polypeptide exit tunnel on the outside of the subunit. This Citrifermentans bemidjiense (strain ATCC BAA-1014 / DSM 16622 / JCM 12645 / Bem) (Geobacter bemidjiensis) protein is Large ribosomal subunit protein uL24.